We begin with the raw amino-acid sequence, 321 residues long: Thioredoxin reductase (321 aa).

36–43 (TGMEKGGQ) is an FAD binding site. C136 and C139 are oxidised to a cystine. Residue 287 to 296 (DVMDHIYRQA) participates in FAD binding.

Belongs to the class-II pyridine nucleotide-disulfide oxidoreductase family. As to quaternary structure, homodimer. FAD is required as a cofactor.

The protein localises to the cytoplasm. It carries out the reaction [thioredoxin]-dithiol + NADP(+) = [thioredoxin]-disulfide + NADPH + H(+). This chain is Thioredoxin reductase (trxB), found in Escherichia coli O157:H7.